Consider the following 289-residue polypeptide: Transmembrane protein 163 (289 aa).

Residues 1–65 are disordered; that stretch reads MEPAAGIQRR…ESGQFSDGLE (65 aa). At 1–88 the chain is on the cytoplasmic side; sequence MEPAAGIQRR…HEAQNYRKKA (88 aa). Position 11 is a phosphoserine (Ser-11). The span at 16 to 36 shows a compositional bias: pro residues; sequence TVPPPPRGHAPPAAAPGPAPL. Positions 42–72 are required for interaction with MCOLN1; the sequence is EPPQLEEERQVRISESGQFSDGLEDRGLLES. A phosphoserine mark is found at Ser-55, Ser-57, and Ser-61. A helical membrane pass occupies residues 89 to 109; sequence LWVSWFSIIVTLALAVAAFTV. Residues 110–116 lie on the Extracellular side of the membrane; sequence SVMRYSA. A helical membrane pass occupies residues 117-137; sequence SAFGFAFDAILDVLSSAIVLW. Topologically, residues 138–150 are cytoplasmic; the sequence is RYSNAAAVHSAHR. A helical membrane pass occupies residues 151 to 171; it reads EYIACVILGVIFLLSSICIVV. Topologically, residues 172-187 are extracellular; that stretch reads KAIHDLSTRLLPEVDD. A helical membrane pass occupies residues 188–208; it reads FLFSVSILSGILCSILAVLKF. Over 209–217 the chain is Cytoplasmic; it reads MLGKVLTSR. Residues 218–238 form a helical membrane-spanning segment; sequence ALITDGFNSLVGGVMGFSILL. At 239–255 the chain is on the extracellular side; it reads SAEVFKHDSAVWYLDGS. The chain crosses the membrane as a helical span at residues 256–276; that stretch reads IGVLIGLTIFAYGVKLLIDMV. Residues 277-289 lie on the Cytoplasmic side of the membrane; sequence PRVRQTRHYEMFE.

The protein belongs to the TMEM163 family. In terms of assembly, homodimer. Interacts with MCOLN1/TRPML1. Interacts with SLC30A1, SLC30A2, SLC30A3 and SLC30A4. As to expression, widely expressed. High expression is detected in brain, lung and testis.

It is found in the cytoplasmic vesicle. Its subcellular location is the secretory vesicle. It localises to the synaptic vesicle membrane. The protein localises to the early endosome membrane. The protein resides in the late endosome membrane. It is found in the lysosome membrane. Its subcellular location is the cell membrane. The catalysed reaction is Zn(2+)(in) = Zn(2+)(out). Functionally, zinc ion transporter that mediates zinc efflux and plays a crucial role in intracellular zinc homeostasis. Binds the divalent cations Zn(2+), Ni(2+), and to a minor extent Cu(2+). Is a functional modulator of P2X purinoceptors, including P2RX1, P2RX3, P2RX4 and P2RX7. Plays a role in central nervous system development and is required for myelination, and survival and proliferation of oligodendrocytes. The sequence is that of Transmembrane protein 163 (TMEM163) from Homo sapiens (Human).